Here is a 61-residue protein sequence, read N- to C-terminus: Small ribosomal subunit protein uS14 (61 aa).

Zn(2+) is bound by residues C24, C27, C40, and C43.

Belongs to the universal ribosomal protein uS14 family. Zinc-binding uS14 subfamily. In terms of assembly, part of the 30S ribosomal subunit. Contacts proteins S3 and S10. Requires Zn(2+) as cofactor.

Binds 16S rRNA, required for the assembly of 30S particles and may also be responsible for determining the conformation of the 16S rRNA at the A site. The protein is Small ribosomal subunit protein uS14 of Alkaliphilus oremlandii (strain OhILAs) (Clostridium oremlandii (strain OhILAs)).